The sequence spans 489 residues: Hyaluronoglucuronidase (489 aa).

Glu176 (proton donor) is an active-site residue. The active-site Nucleophile is the Glu290.

It belongs to the glycosyl hydrolase 79 family.

The enzyme catalyses Random hydrolysis of (1-&gt;3)-linkages between beta-D-glucuronate and N-acetyl-D-glucosamine residues in hyaluronate.. Hyaluronidase activity is inhibited by Mn(2+), Cu(2+) and Fe(3+). In terms of biological role, hyaluronidase that mediates hydrolysis of (1-&gt;3)-linkages between beta-D-glucuronate and N-acetyl-D-glucosamine residues in hyaluronate. Very specific to hyaluronate: not able to hydrolyze chitin, heparin or chondroitin sulfate. The polypeptide is Hyaluronoglucuronidase (Hirudo nipponia (Korean blood-sucking leech)).